The sequence spans 225 residues: Thymidylate kinase (225 aa).

Residue 10–17 coordinates ATP; it reads GIDGAGKS.

The protein belongs to the thymidylate kinase family.

The catalysed reaction is dTMP + ATP = dTDP + ADP. Phosphorylation of dTMP to form dTDP in both de novo and salvage pathways of dTTP synthesis. The sequence is that of Thymidylate kinase from Polaromonas sp. (strain JS666 / ATCC BAA-500).